The chain runs to 492 residues: NADH-quinone oxidoreductase subunit N (492 aa).

A run of 14 helical transmembrane segments spans residues Leu-16 to Phe-36, Leu-44 to Gly-64, Ile-81 to Met-101, Gly-111 to Ser-131, Leu-134 to Leu-154, Phe-168 to Ala-188, Ile-210 to Val-230, Asn-244 to Ile-264, Ala-276 to Ile-296, Met-306 to Thr-326, Val-332 to Trp-352, Leu-382 to Phe-402, Ile-423 to Phe-443, and Phe-463 to Leu-483.

This sequence belongs to the complex I subunit 2 family. As to quaternary structure, NDH-1 is composed of 14 different subunits. Subunits NuoA, H, J, K, L, M, N constitute the membrane sector of the complex.

It localises to the cell inner membrane. The catalysed reaction is a quinone + NADH + 5 H(+)(in) = a quinol + NAD(+) + 4 H(+)(out). Its function is as follows. NDH-1 shuttles electrons from NADH, via FMN and iron-sulfur (Fe-S) centers, to quinones in the respiratory chain. The immediate electron acceptor for the enzyme in this species is believed to be ubiquinone. Couples the redox reaction to proton translocation (for every two electrons transferred, four hydrogen ions are translocated across the cytoplasmic membrane), and thus conserves the redox energy in a proton gradient. The polypeptide is NADH-quinone oxidoreductase subunit N (Helicobacter hepaticus (strain ATCC 51449 / 3B1)).